Reading from the N-terminus, the 245-residue chain is Uridylate kinase (245 aa).

14 to 17 provides a ligand contact to ATP; it reads KLSG. G56 lines the UMP pocket. Residues G57 and R61 each contribute to the ATP site. UMP contacts are provided by residues D76 and 137–144; that span reads TGLPFFTT. ATP contacts are provided by T164, Y170, and D173.

It belongs to the UMP kinase family. As to quaternary structure, homohexamer.

The protein localises to the cytoplasm. It catalyses the reaction UMP + ATP = UDP + ADP. The protein operates within pyrimidine metabolism; CTP biosynthesis via de novo pathway; UDP from UMP (UMPK route): step 1/1. With respect to regulation, inhibited by UTP. Its function is as follows. Catalyzes the reversible phosphorylation of UMP to UDP. The polypeptide is Uridylate kinase (Syntrophobacter fumaroxidans (strain DSM 10017 / MPOB)).